A 379-amino-acid chain; its full sequence is Fructose-1,6-bisphosphate aldolase/phosphatase (379 aa).

D13 functions as the Proton acceptor; for FBP phosphatase activity in the catalytic mechanism. Mg(2+)-binding residues include D13, H20, D51, and D52. H20 contributes to the beta-D-fructose 1,6-bisphosphate binding site. H20 is a dihydroxyacetone phosphate binding site. Position 89 (Y89) interacts with beta-D-fructose 1,6-bisphosphate. Residue Q93 coordinates Mg(2+). 102-103 (GN) lines the beta-D-fructose 1,6-bisphosphate pocket. D130 serves as a coordination point for Mg(2+). K131 provides a ligand contact to beta-D-fructose 1,6-bisphosphate. K131 contacts dihydroxyacetone phosphate. The active-site Proton donor/acceptor; for FBP aldolase activity is the Y227. Positions 230, 231, and 232 each coordinate Mg(2+). The active-site Schiff-base intermediate with DHAP; for FBP aldolase activity is the K230. Beta-D-fructose 1,6-bisphosphate is bound by residues 240 to 241 (QS), R264, D285, and Y346. Residues R264 and D285 each contribute to the dihydroxyacetone phosphate site.

The protein belongs to the FBP aldolase/phosphatase family. Homooctamer; dimer of tetramers. It depends on Mg(2+) as a cofactor.

The enzyme catalyses beta-D-fructose 1,6-bisphosphate + H2O = beta-D-fructose 6-phosphate + phosphate. The catalysed reaction is beta-D-fructose 1,6-bisphosphate = D-glyceraldehyde 3-phosphate + dihydroxyacetone phosphate. Its pathway is carbohydrate biosynthesis; gluconeogenesis. Catalyzes two subsequent steps in gluconeogenesis: the aldol condensation of dihydroxyacetone phosphate (DHAP) and glyceraldehyde-3-phosphate (GA3P) to fructose-1,6-bisphosphate (FBP), and the dephosphorylation of FBP to fructose-6-phosphate (F6P). The sequence is that of Fructose-1,6-bisphosphate aldolase/phosphatase from Moorella thermoacetica (strain ATCC 39073 / JCM 9320).